A 341-amino-acid chain; its full sequence is Putative casein kinase I C03C10.2 (341 aa).

The Protein kinase domain occupies 50–326 (WSIEGVIGNG…KCLYSPKSLL (277 aa)). Residues 56–64 (IGNGGYGQI) and lysine 79 contribute to the ATP site. The active-site Proton acceptor is aspartate 173.

This sequence belongs to the protein kinase superfamily. CK1 Ser/Thr protein kinase family. Casein kinase I subfamily.

The enzyme catalyses L-seryl-[protein] + ATP = O-phospho-L-seryl-[protein] + ADP + H(+). It carries out the reaction L-threonyl-[protein] + ATP = O-phospho-L-threonyl-[protein] + ADP + H(+). This Caenorhabditis elegans protein is Putative casein kinase I C03C10.2.